The primary structure comprises 397 residues: Acetate kinase 2 (397 aa).

Asn8 is a binding site for Mg(2+). Lys15 provides a ligand contact to ATP. Residue Arg89 coordinates substrate. Catalysis depends on Asp146, which acts as the Proton donor/acceptor. Residues 206-210 (HLGNG), 281-283 (DFR), and 329-333 (GVGEN) each bind ATP. Glu380 contributes to the Mg(2+) binding site.

The protein belongs to the acetokinase family. As to quaternary structure, homodimer. The cofactor is Mg(2+). Mn(2+) is required as a cofactor.

It is found in the cytoplasm. The catalysed reaction is acetate + ATP = acetyl phosphate + ADP. It functions in the pathway metabolic intermediate biosynthesis; acetyl-CoA biosynthesis; acetyl-CoA from acetate: step 1/2. Functionally, catalyzes the formation of acetyl phosphate from acetate and ATP. Can also catalyze the reverse reaction. This is Acetate kinase 2 from Listeria monocytogenes serovar 1/2a (strain ATCC BAA-679 / EGD-e).